We begin with the raw amino-acid sequence, 149 residues long: Urease accessory protein UreE (149 aa).

It belongs to the UreE family.

The protein localises to the cytoplasm. Functionally, involved in urease metallocenter assembly. Binds nickel. Probably functions as a nickel donor during metallocenter assembly. This is Urease accessory protein UreE from Prochlorococcus marinus (strain MIT 9301).